Here is an 875-residue protein sequence, read N- to C-terminus: Alanine--tRNA ligase (875 aa).

Positions 426–445 (ERSRKNTVKNKNDSDSIFQD) are disordered. 4 residues coordinate Zn(2+): histidine 561, histidine 565, cysteine 663, and histidine 667.

Belongs to the class-II aminoacyl-tRNA synthetase family. Zn(2+) is required as a cofactor.

It localises to the cytoplasm. It carries out the reaction tRNA(Ala) + L-alanine + ATP = L-alanyl-tRNA(Ala) + AMP + diphosphate. Catalyzes the attachment of alanine to tRNA(Ala) in a two-step reaction: alanine is first activated by ATP to form Ala-AMP and then transferred to the acceptor end of tRNA(Ala). Also edits incorrectly charged Ser-tRNA(Ala) and Gly-tRNA(Ala) via its editing domain. The chain is Alanine--tRNA ligase from Chlamydia muridarum (strain MoPn / Nigg).